Reading from the N-terminus, the 478-residue chain is NADH-quinone oxidoreductase subunit N (478 aa).

Helical transmembrane passes span 8 to 28 (LVLPEVLLAIYAMGVLLFGVW), 38 to 58 (ILWASAVTMLALALIIGLGTG), 62 to 82 (AFGGLFIADGFARFSKVVILV), 106 to 126 (PILIVLAVVGMMMMVSAGDLM), 160 to 180 (FVLGSLSSGLLLYGASLVYGF), 200 to 220 (IGLLFGLVFLLAGLAFKVSAV), 234 to 254 (PTPVTAFFATAPKLAAMALIA), 268 to 288 (WGQILAALALASMYLGAIAGI), 300 to 320 (SSISHMGFGLLGLAAGTAAGV), 322 to 342 (SMLLYMTIYIVMNVGTFAFIL), 368 to 388 (AFALLVLLFSLAGVPPMLGFF), 398 to 418 (IGAGFVWVPVAAVVASVIGAF), and 445 to 465 (FAFLVLAAVAMLGGAINMAGV).

The protein belongs to the complex I subunit 2 family. As to quaternary structure, NDH-1 is composed of 14 different subunits. Subunits NuoA, H, J, K, L, M, N constitute the membrane sector of the complex.

The protein localises to the cellular chromatophore membrane. It carries out the reaction a quinone + NADH + 5 H(+)(in) = a quinol + NAD(+) + 4 H(+)(out). NDH-1 shuttles electrons from NADH, via FMN and iron-sulfur (Fe-S) centers, to quinones in the respiratory chain. The immediate electron acceptor for the enzyme in this species is believed to be ubiquinone. Couples the redox reaction to proton translocation (for every two electrons transferred, four hydrogen ions are translocated across the cytoplasmic membrane), and thus conserves the redox energy in a proton gradient. This chain is NADH-quinone oxidoreductase subunit N, found in Rhodobacter capsulatus (Rhodopseudomonas capsulata).